The sequence spans 64 residues: Prokaryotic ubiquitin-like protein Pup (64 aa).

Residues 1-11 (MAQEQTKRTGG) show a composition bias toward basic and acidic residues. The interval 1–37 (MAQEQTKRTGGGDEDDTPGADGAAGQERREKLAEDTD) is disordered. Positions 21–58 (DGAAGQERREKLAEDTDDLLDEIDDVLEENAEDFVRAY) are ARC ATPase binding. Residues 24-52 (AGQERREKLAEDTDDLLDEIDDVLEENAE) adopt a coiled-coil conformation. Q64 is modified (deamidated glutamine). Q64 is covalently cross-linked (Isoglutamyl lysine isopeptide (Gln-Lys) (interchain with K-? in acceptor proteins)).

Belongs to the prokaryotic ubiquitin-like protein family. As to quaternary structure, strongly interacts with the proteasome-associated ATPase ARC through a hydrophobic interface; the interacting region of Pup lies in its C-terminal half. There is one Pup binding site per ARC hexamer ring. In terms of processing, is modified by deamidation of its C-terminal glutamine to glutamate by the deamidase Dop, a prerequisite to the subsequent pupylation process.

Its pathway is protein degradation; proteasomal Pup-dependent pathway. In terms of biological role, protein modifier that is covalently attached to lysine residues of substrate proteins, thereby targeting them for proteasomal degradation. The tagging system is termed pupylation. The sequence is that of Prokaryotic ubiquitin-like protein Pup from Rhodococcus jostii (strain RHA1).